The chain runs to 261 residues: Putative quercetin 2,3-dioxygenase Ta0133 (261 aa).

Residues His-17, His-19, His-61, and Glu-63 each contribute to the a divalent metal cation site.

The protein belongs to the pirin family. A divalent metal cation is required as a cofactor.

The catalysed reaction is quercetin + O2 = 2-(3,4-dihydroxybenzoyloxy)-4,6-dihydroxybenzoate + CO. The protein operates within flavonoid metabolism; quercetin degradation. Functionally, putative quercetin 2,3-dioxygenase. The polypeptide is Putative quercetin 2,3-dioxygenase Ta0133 (Thermoplasma acidophilum (strain ATCC 25905 / DSM 1728 / JCM 9062 / NBRC 15155 / AMRC-C165)).